A 536-amino-acid polypeptide reads, in one-letter code: Putative beta-xylosidase (536 aa).

Asp-14 (proton acceptor) is an active-site residue. The active-site Proton donor is the Glu-186.

It belongs to the glycosyl hydrolase 43 family.

The enzyme catalyses Hydrolysis of (1-&gt;4)-beta-D-xylans, to remove successive D-xylose residues from the non-reducing termini.. In Escherichia coli (strain K12), this protein is Putative beta-xylosidase (yagH).